The following is a 148-amino-acid chain: Gastrin-releasing peptide (148 aa).

The signal sequence occupies residues 1 to 23; sequence MRGRELPLVLLALVLCLAPRGRA. The residue at position 50 (Met-50) is a Methionine amide. The propeptide occupies 54 to 148; sequence STGESSSVSE…EGRNPQLNQQ (95 aa). Residues 89-148 are disordered; sequence EAKENRNHQPPQPKALGNQQPSWDSEDSSNFKDVGSKGKVGRLSAPGSQREGRNPQLNQQ.

It belongs to the bombesin/neuromedin-B/ranatensin family.

The protein localises to the secreted. It localises to the cytoplasmic vesicle. Its subcellular location is the secretory vesicle lumen. The protein resides in the cell projection. It is found in the neuron projection. Functionally, stimulates the release of gastrin and other gastrointestinal hormones. Contributes to the perception of prurient stimuli and to the transmission of itch signals in the spinal cord that promote scratching behavior. Contributes primarily to nonhistaminergic itch sensation. In one study, shown to act in the amygdala as part of an inhibitory network which inhibits memory specifically related to learned fear. In another study, shown to act on vasoactive intestinal peptide (VIP)-expressing cells in the auditory cortex, most likely via extrasynaptic diffusion from local and long-range sources, to mediate disinhibition of glutamatergic cells via VIP cell-specific GRPR signaling which leads to enhanced auditory fear memories. Contributes to the regulation of food intake. Inhibits voltage-gated sodium channels but enhances voltage-gated potassium channels in hippocampal neurons. Induces sighing by acting directly on the pre-Botzinger complex, a cluster of several thousand neurons in the ventrolateral medulla responsible for inspiration during respiratory activity. Its function is as follows. Induces an itch response through activation of receptors present on mast cells, triggering mast cell degranulation. The sequence is that of Gastrin-releasing peptide (GRP) from Homo sapiens (Human).